The sequence spans 239 residues: 4-hydroxy-tetrahydrodipicolinate reductase (239 aa).

NAD(+) is bound by residues 9-14, 78-80, and 104-107; these read GINGKI, GTT, and APNF. His134 functions as the Proton donor/acceptor in the catalytic mechanism. (S)-2,3,4,5-tetrahydrodipicolinate is bound at residue His135. Lys138 (proton donor) is an active-site residue. Residue 144 to 145 participates in (S)-2,3,4,5-tetrahydrodipicolinate binding; it reads GT.

This sequence belongs to the DapB family.

It localises to the cytoplasm. It carries out the reaction (S)-2,3,4,5-tetrahydrodipicolinate + NAD(+) + H2O = (2S,4S)-4-hydroxy-2,3,4,5-tetrahydrodipicolinate + NADH + H(+). The catalysed reaction is (S)-2,3,4,5-tetrahydrodipicolinate + NADP(+) + H2O = (2S,4S)-4-hydroxy-2,3,4,5-tetrahydrodipicolinate + NADPH + H(+). The protein operates within amino-acid biosynthesis; L-lysine biosynthesis via DAP pathway; (S)-tetrahydrodipicolinate from L-aspartate: step 4/4. In terms of biological role, catalyzes the conversion of 4-hydroxy-tetrahydrodipicolinate (HTPA) to tetrahydrodipicolinate. In Coxiella burnetii (strain CbuG_Q212) (Coxiella burnetii (strain Q212)), this protein is 4-hydroxy-tetrahydrodipicolinate reductase.